We begin with the raw amino-acid sequence, 163 residues long: Phosphopantetheine adenylyltransferase (163 aa).

Substrate is bound at residue Thr-9. Residues 9–10 (TF) and His-17 each bind ATP. The substrate site is built by Lys-41, Leu-76, and Arg-90. Residues 91-93 (GLR), Glu-101, and 126-132 (YSFISST) each bind ATP.

This sequence belongs to the bacterial CoaD family. Homohexamer. It depends on Mg(2+) as a cofactor.

It localises to the cytoplasm. The catalysed reaction is (R)-4'-phosphopantetheine + ATP + H(+) = 3'-dephospho-CoA + diphosphate. It functions in the pathway cofactor biosynthesis; coenzyme A biosynthesis; CoA from (R)-pantothenate: step 4/5. In terms of biological role, reversibly transfers an adenylyl group from ATP to 4'-phosphopantetheine, yielding dephospho-CoA (dPCoA) and pyrophosphate. This is Phosphopantetheine adenylyltransferase from Dichelobacter nodosus (strain VCS1703A).